Reading from the N-terminus, the 405-residue chain is Tyrosine--tRNA ligase (405 aa).

Y35 is a binding site for L-tyrosine. Residues 40-49 carry the 'HIGH' region motif; sequence ATSSSLHIGH. 2 residues coordinate L-tyrosine: Y166 and Q170. Positions 226–230 match the 'KMSKS' region motif; that stretch reads KMGKS. K229 contacts ATP. The S4 RNA-binding domain maps to 340–405; sequence ILLVDLMLDS…GKKKFLRIVI (66 aa).

It belongs to the class-I aminoacyl-tRNA synthetase family. TyrS type 1 subfamily. In terms of assembly, homodimer.

The protein localises to the cytoplasm. The enzyme catalyses tRNA(Tyr) + L-tyrosine + ATP = L-tyrosyl-tRNA(Tyr) + AMP + diphosphate + H(+). Its function is as follows. Catalyzes the attachment of tyrosine to tRNA(Tyr) in a two-step reaction: tyrosine is first activated by ATP to form Tyr-AMP and then transferred to the acceptor end of tRNA(Tyr). The sequence is that of Tyrosine--tRNA ligase from Borreliella burgdorferi (strain ATCC 35210 / DSM 4680 / CIP 102532 / B31) (Borrelia burgdorferi).